We begin with the raw amino-acid sequence, 396 residues long: Decapping nuclease RAI1 (396 aa).

Position 107 to 109 (107 to 109 (YRG)) interacts with substrate. E179 contacts a divalent metal cation. E228 contributes to the substrate binding site. 3 residues coordinate a divalent metal cation: D230, E249, and L250. The substrate site is built by K251 and Q275.

Belongs to the DXO/Dom3Z family. In terms of assembly, interacts with RAT1; the interaction is direct, stabilizes RAT1 protein structure and stimulates its exoribonuclease activity. The interaction also stimulates RAI1 pyrophosphohydrolase activity, probably by recruiting it to mRNA substrates. The cofactor is a divalent metal cation.

It is found in the nucleus. It catalyses the reaction a 5'-end NAD(+)-phospho-ribonucleoside in mRNA + H2O = a 5'-end phospho-ribonucleoside in mRNA + NAD(+) + H(+). It carries out the reaction a 5'-end (N(7)-methyl 5'-triphosphoguanosine)-ribonucleoside-ribonucleotide in mRNA + H2O = a (N(7)-methyl 5'-triphosphoguanosine)-nucleoside + a 5'-end phospho-ribonucleoside in mRNA + H(+). The enzyme catalyses a 5'-end triphospho-ribonucleoside in mRNA + H2O = a 5'-end phospho-ribonucleoside in mRNA + diphosphate + H(+). In terms of biological role, decapping enzyme for NAD-capped RNAs: specifically hydrolyzes the nicotinamide adenine dinucleotide (NAD) cap from a subset of RNAs by removing the entire NAD moiety from the 5'-end of an NAD-capped RNA. The NAD-cap is present at the 5'-end of some RNAs and snoRNAs. In contrast to the canonical 5'-end N7 methylguanosine (m7G) cap, the NAD cap promotes mRNA decay. Also acts as a non-canonical decapping enzyme that removes the entire cap structure of m7G capped or incompletely capped RNAs. Has decapping activity toward incomplete 5'-end m7G cap mRNAs such as unmethylated 5'-end-capped RNA (cap0), while it has no activity toward 2'-O-ribose methylated m7G cap (cap1). Also possesses RNA 5'-pyrophosphohydrolase activity by hydrolyzing the 5'-end triphosphate to release pyrophosphates. Stimulates exoribonuclease activity of Rat1, allowing it to degrade RNAs with stable secondary structure more effectively. The protein is Decapping nuclease RAI1 of Scheffersomyces stipitis (strain ATCC 58785 / CBS 6054 / NBRC 10063 / NRRL Y-11545) (Yeast).